Consider the following 1099-residue polypeptide: Carbamoyl phosphate synthase large chain (1099 aa).

Positions 1–402 (MPKREDIKRI…ALGKALRSLE (402 aa)) are carboxyphosphate synthetic domain. Positions 129, 169, 175, 176, 208, 210, 215, 241, 242, 243, 285, and 299 each coordinate ATP. An ATP-grasp 1 domain is found at 133 to 328 (KETMEKAGLE…IAKVAALLAV (196 aa)). Mg(2+) contacts are provided by Gln-285, Glu-299, and Asn-301. Mn(2+) contacts are provided by Gln-285, Glu-299, and Asn-301. The oligomerization domain stretch occupies residues 403–541 (LDAAPKLDLE…STYNGVENEA (139 aa)). Positions 542-944 (VPSDREKIMI…AFAKAQIAAG (403 aa)) are carbamoyl phosphate synthetic domain. The ATP-grasp 2 domain occupies 666–857 (AKLLKQIGLK…VARIAAKIMV (192 aa)). ATP contacts are provided by Arg-702, Lys-741, Leu-743, Glu-748, Gly-773, Val-774, His-775, Ser-776, Gln-816, and Glu-828. Positions 816, 828, and 830 each coordinate Mg(2+). Mn(2+) contacts are provided by Gln-816, Glu-828, and Asn-830. The 155-residue stretch at 945–1099 (NPLPTTGAIL…VRRLTDTWKM (155 aa)) folds into the MGS-like domain. The interval 945-1099 (NPLPTTGAIL…VRRLTDTWKM (155 aa)) is allosteric domain.

Belongs to the CarB family. As to quaternary structure, composed of two chains; the small (or glutamine) chain promotes the hydrolysis of glutamine to ammonia, which is used by the large (or ammonia) chain to synthesize carbamoyl phosphate. Tetramer of heterodimers (alpha,beta)4. The cofactor is Mg(2+). It depends on Mn(2+) as a cofactor.

It carries out the reaction hydrogencarbonate + L-glutamine + 2 ATP + H2O = carbamoyl phosphate + L-glutamate + 2 ADP + phosphate + 2 H(+). It catalyses the reaction hydrogencarbonate + NH4(+) + 2 ATP = carbamoyl phosphate + 2 ADP + phosphate + 2 H(+). It functions in the pathway amino-acid biosynthesis; L-arginine biosynthesis; carbamoyl phosphate from bicarbonate: step 1/1. Its pathway is pyrimidine metabolism; UMP biosynthesis via de novo pathway; (S)-dihydroorotate from bicarbonate: step 1/3. Its function is as follows. Large subunit of the glutamine-dependent carbamoyl phosphate synthetase (CPSase). CPSase catalyzes the formation of carbamoyl phosphate from the ammonia moiety of glutamine, carbonate, and phosphate donated by ATP, constituting the first step of 2 biosynthetic pathways, one leading to arginine and/or urea and the other to pyrimidine nucleotides. The large subunit (synthetase) binds the substrates ammonia (free or transferred from glutamine from the small subunit), hydrogencarbonate and ATP and carries out an ATP-coupled ligase reaction, activating hydrogencarbonate by forming carboxy phosphate which reacts with ammonia to form carbamoyl phosphate. The sequence is that of Carbamoyl phosphate synthase large chain from Thermotoga sp. (strain RQ2).